A 74-amino-acid chain; its full sequence is Small ribosomal subunit protein bS18 (74 aa).

The protein belongs to the bacterial ribosomal protein bS18 family. Part of the 30S ribosomal subunit. Forms a tight heterodimer with protein bS6.

Binds as a heterodimer with protein bS6 to the central domain of the 16S rRNA, where it helps stabilize the platform of the 30S subunit. The protein is Small ribosomal subunit protein bS18 of Sphingopyxis alaskensis (strain DSM 13593 / LMG 18877 / RB2256) (Sphingomonas alaskensis).